The following is a 359-amino-acid chain: Peptide chain release factor 1 (359 aa).

Gln-235 is modified (N5-methylglutamine). Residues 283-305 are disordered; the sequence is QKAESERSASRKTQVGSGDRSER.

Belongs to the prokaryotic/mitochondrial release factor family. Post-translationally, methylated by PrmC. Methylation increases the termination efficiency of RF1.

The protein resides in the cytoplasm. Its function is as follows. Peptide chain release factor 1 directs the termination of translation in response to the peptide chain termination codons UAG and UAA. The sequence is that of Peptide chain release factor 1 from Bartonella bacilliformis (strain ATCC 35685 / KC583 / Herrer 020/F12,63).